The following is an 84-amino-acid chain: ATP synthase subunit c (84 aa).

A run of 2 helical transmembrane segments spans residues 10 to 30 and 53 to 73; these read IAVG…FALL and FIIA…ALLF.

The protein belongs to the ATPase C chain family. In terms of assembly, F-type ATPases have 2 components, F(1) - the catalytic core - and F(0) - the membrane proton channel. F(1) has five subunits: alpha(3), beta(3), gamma(1), delta(1), epsilon(1). F(0) has three main subunits: a(1), b(2) and c(10-14). The alpha and beta chains form an alternating ring which encloses part of the gamma chain. F(1) is attached to F(0) by a central stalk formed by the gamma and epsilon chains, while a peripheral stalk is formed by the delta and b chains.

The protein localises to the cell inner membrane. In terms of biological role, f(1)F(0) ATP synthase produces ATP from ADP in the presence of a proton or sodium gradient. F-type ATPases consist of two structural domains, F(1) containing the extramembraneous catalytic core and F(0) containing the membrane proton channel, linked together by a central stalk and a peripheral stalk. During catalysis, ATP synthesis in the catalytic domain of F(1) is coupled via a rotary mechanism of the central stalk subunits to proton translocation. Functionally, key component of the F(0) channel; it plays a direct role in translocation across the membrane. A homomeric c-ring of between 10-14 subunits forms the central stalk rotor element with the F(1) delta and epsilon subunits. The protein is ATP synthase subunit c of Vibrio alginolyticus.